A 340-amino-acid polypeptide reads, in one-letter code: N-acetyl-gamma-glutamyl-phosphate reductase (340 aa).

Cys146 is a catalytic residue.

Belongs to the NAGSA dehydrogenase family. Type 1 subfamily.

Its subcellular location is the cytoplasm. The catalysed reaction is N-acetyl-L-glutamate 5-semialdehyde + phosphate + NADP(+) = N-acetyl-L-glutamyl 5-phosphate + NADPH + H(+). The protein operates within amino-acid biosynthesis; L-arginine biosynthesis; N(2)-acetyl-L-ornithine from L-glutamate: step 3/4. In terms of biological role, catalyzes the NADPH-dependent reduction of N-acetyl-5-glutamyl phosphate to yield N-acetyl-L-glutamate 5-semialdehyde. This chain is N-acetyl-gamma-glutamyl-phosphate reductase, found in Streptococcus thermophilus (strain ATCC BAA-491 / LMD-9).